A 115-amino-acid chain; its full sequence is Nucleoid-associated protein Npun_F0448 (115 aa).

The protein belongs to the YbaB/EbfC family. Homodimer.

Its subcellular location is the cytoplasm. The protein localises to the nucleoid. Binds to DNA and alters its conformation. May be involved in regulation of gene expression, nucleoid organization and DNA protection. The sequence is that of Nucleoid-associated protein Npun_F0448 from Nostoc punctiforme (strain ATCC 29133 / PCC 73102).